Consider the following 302-residue polypeptide: MARVTTGITSSHIPALGAAIQTGTSDNDYWGPVFKGYQPIRDWIKQPGNMPDVVILVYNDHASAFDMNIIPTFAIGCAETFKPADEGWGPRPVPDVKGHPDLAWHIAQSLILDEFDMTIMNQMDVDHGCTVPLSMIFGEPEEWPCKVIPFPVNVVTYPPPSGKRCFALGDSIRAAVESFPEDLNVHVWGTGGMSHQLQGPRAGLINKEFDLNFIDKLISDPEELSKMPHIQYLRESGSEGVELVMWLIMRGALPEKVRDLYTFYHIPASNTALGAMILQPEETAGTPLEPRKVMSGHSLAQA.

Composed of two subunits (alpha and beta) in a 1:1 ratio. The cofactor is Fe(2+).

It catalyses the reaction 3,4-dihydroxybenzoate + O2 = 4-carboxy-2-hydroxy-cis,cis-muconate 6-semialdehyde + H(+). In terms of biological role, responsible for the aromatic ring fission of protocatechuate. The sequence is that of Protocatechuate 4,5-dioxygenase beta chain (ligB) from Sphingobium sp. (strain NBRC 103272 / SYK-6).